Here is a 420-residue protein sequence, read N- to C-terminus: Trophoblast glycoprotein (420 aa).

A signal peptide spans 1–31 (MPGGCSRGPAAGDGRLRLARLALVLLGWVSS). Over 32–355 (SSPTSSASSF…PILPPSLQTS (324 aa)) the chain is Extracellular. The LRRNT domain occupies 53-91 (SAQPPLPDQCPALCECSEAARTVKCVNRNLTEVPTDLPA). Cystine bridges form between C62/C68 and C66/C77. A glycan (N-linked (GlcNAc...) asparagine) is linked at N81. 7 LRR repeats span residues 92 to 113 (YVRN…AFAR), 116 to 139 (PLAE…GAFE), 141 to 163 (LPSL…FAFS), 172 to 204 (PSPL…AALL), 209 to 232 (LQGL…VLAQ), 233 to 255 (LPSL…VSFR), and 256 to 275 (NLTH…VLHN). N-linked (GlcNAc...) asparagine glycosylation occurs at N124. An N-linked (GlcNAc...) asparagine glycan is attached at N275. The 64-residue stretch at 283-346 (GLPHIRVFLD…LNSADLDCDP (64 aa)) folds into the LRRCT domain. 2 cysteine pairs are disulfide-bonded: C298-C323 and C300-C344. The helical transmembrane segment at 356 to 376 (YVFLGIVLALIGAIFLLVLYL) threads the bilayer. At 377-420 (NRKGIKKWMHNIRDACRDHMEGYHYRYEINADPRLTNLSSNSDV) the chain is on the cytoplasmic side. Phosphoserine is present on S418.

In terms of processing, highly glycosylated. As to expression, expressed by all types of trophoblasts as early as 9 weeks of development. Specific for trophoblastic cells except for amniotic epithelium. In adult tissues, the expression is limited to a few epithelial cell types but is found on a variety of carcinoma.

The protein localises to the cell membrane. Its function is as follows. May function as an inhibitor of Wnt/beta-catenin signaling by indirectly interacting with LRP6 and blocking Wnt3a-dependent LRP6 internalization. The protein is Trophoblast glycoprotein (TPBG) of Homo sapiens (Human).